A 344-amino-acid chain; its full sequence is Phosphoribosylformylglycinamidine cyclo-ligase (344 aa).

The protein belongs to the AIR synthase family.

The protein localises to the cytoplasm. It carries out the reaction 2-formamido-N(1)-(5-O-phospho-beta-D-ribosyl)acetamidine + ATP = 5-amino-1-(5-phospho-beta-D-ribosyl)imidazole + ADP + phosphate + H(+). Its pathway is purine metabolism; IMP biosynthesis via de novo pathway; 5-amino-1-(5-phospho-D-ribosyl)imidazole from N(2)-formyl-N(1)-(5-phospho-D-ribosyl)glycinamide: step 2/2. This is Phosphoribosylformylglycinamidine cyclo-ligase from Leptospira interrogans serogroup Icterohaemorrhagiae serovar Lai (strain 56601).